A 275-amino-acid polypeptide reads, in one-letter code: Exosome complex component RRP40 (275 aa).

Ala-2 is subject to N-acetylalanine. Residue Lys-151 forms a Glycyl lysine isopeptide (Lys-Gly) (interchain with G-Cter in SUMO2) linkage.

It belongs to the RRP40 family. As to quaternary structure, component of the RNA exosome core complex (Exo-9), composed of EXOSC1, EXOSC2, EXOSC3, EXOSC4, EXOSC5, EXOSC6, EXOSC7, EXOSC8 and EXOSC9; within the complex interacts with EXOSC5 and EXOSC9. The catalytically inactive RNA exosome core complex (Exo-9) associates with the catalytic subunit EXOSC10/RRP6. Exo-9 may associate with DIS3 to form the nucleolar exosome complex, or DIS3L to form the cytoplasmic exosome complex. Exo-9 is formed by a hexameric base ring consisting of the heterodimers EXOSC4-EXOSC9, EXOSC5-EXOSC8 and EXOSC6-EXOSC7, and a cap ring consisting of EXOSC1, EXOSC2 and EXOSC3. The RNA exosome complex associates with cofactors C1D/RRP47, MPHOSPH6/MPP6 and MTREX/MTR4. Interacts with MPHOSPH6/MPP6; the interaction is direct. Interacts with GTPBP1. Interacts with ZC3HAV1. Interacts with DDX17 only in the presence of ZC3HAV1 in an RNA-independent manner. Interacts with DHX36; this interaction occurs in a RNase-insensitive manner. Interacts with HBS1L isoform 2.

It localises to the cytoplasm. Its subcellular location is the nucleus. It is found in the nucleolus. In terms of biological role, non-catalytic component of the RNA exosome complex which has 3'-&gt;5' exoribonuclease activity and participates in a multitude of cellular RNA processing and degradation events. In the nucleus, the RNA exosome complex is involved in proper maturation of stable RNA species such as rRNA, snRNA and snoRNA, in the elimination of RNA processing by-products and non-coding 'pervasive' transcripts, such as antisense RNA species and promoter-upstream transcripts (PROMPTs), and of mRNAs with processing defects, thereby limiting or excluding their export to the cytoplasm. The RNA exosome may be involved in Ig class switch recombination (CSR) and/or Ig variable region somatic hypermutation (SHM) by targeting AICDA deamination activity to transcribed dsDNA substrates. In the cytoplasm, the RNA exosome complex is involved in general mRNA turnover and specifically degrades inherently unstable mRNAs containing AU-rich elements (AREs) within their 3' untranslated regions, and in RNA surveillance pathways, preventing translation of aberrant mRNAs. It seems to be involved in degradation of histone mRNA. The catalytic inactive RNA exosome core complex of 9 subunits (Exo-9) is proposed to play a pivotal role in the binding and presentation of RNA for ribonucleolysis, and to serve as a scaffold for the association with catalytic subunits and accessory proteins or complexes. EXOSC3 as peripheral part of the Exo-9 complex stabilizes the hexameric ring of RNase PH-domain subunits through contacts with EXOSC9 and EXOSC5. This is Exosome complex component RRP40 (EXOSC3) from Bos taurus (Bovine).